The sequence spans 1930 residues: Myosin-16 (1930 aa).

Positions 35–84 (DIKKSCWVKDEKEGFIAGEIQSEQGDQVTVKTVNNQTVTVKKDDVQQMNP) constitute a Myosin N-terminal SH3-like domain. Positions 88–774 (YQASDMADMT…ILAKLEDMRD (687 aa)) constitute a Myosin motor domain. ATP is bound at residue 181-188 (GESGAGKT). Actin-binding regions lie at residues 652–674 (LNKL…VPNE) and 753–767 (KIGH…GILA). One can recognise an IQ domain in the interval 777 to 806 (LAKIMTMLQCRLRGFLMRIEFKKMLERRIG). Residues 835–1921 (LLNVARQEEE…ALNKLRTRHR (1087 aa)) are a coiled coil. The tract at residues 1116–1137 (EELEAERSMRAKVEKQRSDLSR) is disordered. Residues 1120-1137 (AERSMRAKVEKQRSDLSR) are compositionally biased toward basic and acidic residues.

The protein belongs to the TRAFAC class myosin-kinesin ATPase superfamily. Myosin family.

It is found in the cytoplasm. The protein localises to the myofibril. In terms of biological role, may play a role in masticatory muscles contraction. The sequence is that of Myosin-16 from Canis lupus familiaris (Dog).